Here is a 350-residue protein sequence, read N- to C-terminus: Twinfilin-1 (350 aa).

ADF-H domains lie at Gln4 to Ala139 and Gly177 to His313. The interval Gln316 to Asp350 is disordered.

The protein belongs to the actin-binding proteins ADF family. Twinfilin subfamily. Interacts with G-actin; ADP-actin form.

It is found in the cytoplasm. It localises to the cytoskeleton. Its function is as follows. Actin-binding protein involved in motile and morphological processes. Inhibits actin polymerization, likely by sequestering G-actin. The sequence is that of Twinfilin-1 (twf1) from Xenopus tropicalis (Western clawed frog).